The chain runs to 157 residues: Transcriptional repressor NrdR (157 aa).

The tract at residues 1–24 is disordered; that stretch reads MRCPKCGGNKSSVVDSRQAEDGNT. The segment at 3–34 is a zinc-finger region; that stretch reads CPKCGGNKSSVVDSRQAEDGNTIRRRRECEEC. The ATP-cone domain maps to 49–139; sequence LVVVKKDGTR…VYRSFKDVGE (91 aa).

It belongs to the NrdR family. Requires Zn(2+) as cofactor.

Functionally, negatively regulates transcription of bacterial ribonucleotide reductase nrd genes and operons by binding to NrdR-boxes. The sequence is that of Transcriptional repressor NrdR from Streptococcus sanguinis (strain SK36).